The following is a 482-amino-acid chain: tRNA sulfurtransferase (482 aa).

Residues 61–165 (LAIRDALTRI…DDRLLLIKGR (105 aa)) form the THUMP domain. ATP-binding positions include 183–184 (LI), lysine 265, glycine 287, and glutamine 296. Cysteine 344 and cysteine 456 are oxidised to a cystine. The Rhodanese domain maps to 404–482 (FGPNDVILDI…GFNNVKVYRP (79 aa)). Catalysis depends on cysteine 456, which acts as the Cysteine persulfide intermediate.

The protein belongs to the ThiI family.

The protein localises to the cytoplasm. The catalysed reaction is [ThiI sulfur-carrier protein]-S-sulfanyl-L-cysteine + a uridine in tRNA + 2 reduced [2Fe-2S]-[ferredoxin] + ATP + H(+) = [ThiI sulfur-carrier protein]-L-cysteine + a 4-thiouridine in tRNA + 2 oxidized [2Fe-2S]-[ferredoxin] + AMP + diphosphate. It catalyses the reaction [ThiS sulfur-carrier protein]-C-terminal Gly-Gly-AMP + S-sulfanyl-L-cysteinyl-[cysteine desulfurase] + AH2 = [ThiS sulfur-carrier protein]-C-terminal-Gly-aminoethanethioate + L-cysteinyl-[cysteine desulfurase] + A + AMP + 2 H(+). Its pathway is cofactor biosynthesis; thiamine diphosphate biosynthesis. Catalyzes the ATP-dependent transfer of a sulfur to tRNA to produce 4-thiouridine in position 8 of tRNAs, which functions as a near-UV photosensor. Also catalyzes the transfer of sulfur to the sulfur carrier protein ThiS, forming ThiS-thiocarboxylate. This is a step in the synthesis of thiazole, in the thiamine biosynthesis pathway. The sulfur is donated as persulfide by IscS. The polypeptide is tRNA sulfurtransferase (Shigella sonnei (strain Ss046)).